Consider the following 98-residue polypeptide: MTLIHMNIIMAFSMSLVGLLMYRSHLMSALLCLEGMMLSLFVLAALTILNSHFTLANMMPIILLVFAACEAAIGLALLVTISNTYGTDYVQNLNLLQC.

Transmembrane regions (helical) follow at residues 1 to 21 (MTLI…GLLM), 29 to 49 (ALLC…LTIL), and 61 to 81 (IILL…LVTI).

It belongs to the complex I subunit 4L family. Core subunit of respiratory chain NADH dehydrogenase (Complex I) which is composed of 45 different subunits.

Its subcellular location is the mitochondrion inner membrane. It carries out the reaction a ubiquinone + NADH + 5 H(+)(in) = a ubiquinol + NAD(+) + 4 H(+)(out). In terms of biological role, core subunit of the mitochondrial membrane respiratory chain NADH dehydrogenase (Complex I) which catalyzes electron transfer from NADH through the respiratory chain, using ubiquinone as an electron acceptor. Part of the enzyme membrane arm which is embedded in the lipid bilayer and involved in proton translocation. In Eubalaena australis (Southern right whale), this protein is NADH-ubiquinone oxidoreductase chain 4L (MT-ND4L).